Consider the following 255-residue polypeptide: Zinc finger CCCH domain-containing protein 37 (255 aa).

2 consecutive C3H1-type zinc fingers follow at residues 98-128 (AYTG…HGTF) and 137-159 (YRTR…AHTA).

The chain is Zinc finger CCCH domain-containing protein 37 from Oryza sativa subsp. japonica (Rice).